The chain runs to 40 residues: Putative NAD(P)-dependent glyceraldehyde-3-phosphate dehydrogenase PS5 (40 aa).

This Pinus strobus (Eastern white pine) protein is Putative NAD(P)-dependent glyceraldehyde-3-phosphate dehydrogenase PS5.